The chain runs to 124 residues: Small ribosomal subunit protein uS12 (124 aa).

The segment at 1 to 42 (MPTIQQLVRKGRRPKVNKTKSPALRGNPQQRGVCSRVYTTTP) is disordered. Residues 9-18 (RKGRRPKVNK) show a composition bias toward basic residues. Residues 27-42 (NPQQRGVCSRVYTTTP) show a composition bias toward polar residues. Asp89 carries the 3-methylthioaspartic acid modification.

It belongs to the universal ribosomal protein uS12 family. Part of the 30S ribosomal subunit. Contacts proteins S8 and S17. May interact with IF1 in the 30S initiation complex.

Its function is as follows. With S4 and S5 plays an important role in translational accuracy. In terms of biological role, interacts with and stabilizes bases of the 16S rRNA that are involved in tRNA selection in the A site and with the mRNA backbone. Located at the interface of the 30S and 50S subunits, it traverses the body of the 30S subunit contacting proteins on the other side and probably holding the rRNA structure together. The combined cluster of proteins S8, S12 and S17 appears to hold together the shoulder and platform of the 30S subunit. This Tropheryma whipplei (strain TW08/27) (Whipple's bacillus) protein is Small ribosomal subunit protein uS12.